The chain runs to 92 residues: Small ribosomal subunit protein uS19 (92 aa).

It belongs to the universal ribosomal protein uS19 family.

In terms of biological role, protein S19 forms a complex with S13 that binds strongly to the 16S ribosomal RNA. This chain is Small ribosomal subunit protein uS19, found in Pectobacterium atrosepticum (strain SCRI 1043 / ATCC BAA-672) (Erwinia carotovora subsp. atroseptica).